The chain runs to 202 residues: FMN-dependent NADH:quinone oxidoreductase 1 (202 aa).

Residues Ser-9, 15–17 (SAS), 95–98 (MYNF), and 139–142 (TSGG) contribute to the FMN site.

It belongs to the azoreductase type 1 family. Homodimer. FMN serves as cofactor.

It carries out the reaction 2 a quinone + NADH + H(+) = 2 a 1,4-benzosemiquinone + NAD(+). It catalyses the reaction N,N-dimethyl-1,4-phenylenediamine + anthranilate + 2 NAD(+) = 2-(4-dimethylaminophenyl)diazenylbenzoate + 2 NADH + 2 H(+). In terms of biological role, quinone reductase that provides resistance to thiol-specific stress caused by electrophilic quinones. Also exhibits azoreductase activity. Catalyzes the reductive cleavage of the azo bond in aromatic azo compounds to the corresponding amines. This chain is FMN-dependent NADH:quinone oxidoreductase 1, found in Pseudomonas syringae pv. tomato (strain ATCC BAA-871 / DC3000).